The following is a 1125-amino-acid chain: MAHARHLFLFMVAFTITMVIARLDFNPTIINEDRGRTKIHVGLLAEWTTADGDQGTLGFPALGALPLAISLANQDSNILNGFDVQFEWVDTHCDINIGMHAVSDWWKRGFVGVIGPGCGCTYEGRLASALNIPMIDYVCDENPVSDKSIYPTFLRTIPPSIQVVEAIILTLQRYELDQVSVVVENITKYRNIFNTMKDKFDERDYEILHEEYYAGFDPWDYEMDDPFSEIIQRTKETTRIYVFFGDASDLRQFAMTALDEGILDSGDYVILGAVVDLEVRDSQDYHSLDYILDTSEYLNQINPDYARLFKNREYTRSDNDRALEALKSVIIVTGAPVLKTRNWDRFSTFVIDNALDAPFNGELELRAEIDFASVYMFDATMQLLEALDRTHAAGGDIYDGEEVVSTLLNSTYRSKTDTFYQFDENGDGVKPYVLLHLIPIPKGDGGATKDSLGMYPIGTFNRENGQWGFEEALDEDANVLKPVWHNRDEPPLDMPPCGFHGELCTNWALYLGASIPTFLIIFGGLIGFFIYRKRAYEAALDSLVWKVDWSEVQTKATDTNSQGFSMKNMVMSAISVISNAEKQQIFATIGTYRGTVCALHAVHKNHIDLTRAVRTELKIMRDMRHDNICPFIGACIDRPHISILMHYCAKGSLQDILENDDIKLDSMFLSSLIADLVKGIVYLHSSEIKSHGHLKSSNCVVDNRWVLQITDYGLNEFKKGQKQDVDLGDHAKLARQLWTSPEHLRQEGSMPTAGSPQGDIYSFAIILTELYSRQEPFHENEMDLADIIGRVKSGEVPPYRPILNAVNAAAPDCVLSAIRACWPEDPADRPNIMAVRTMLAPLQKGLKPNILDNMIAIMERYTNNLEELVDERTQELQKEKTKTEQLLHRMLPPSIASQLIKGIAVLPETFEMVSIFFSDIVGFTALSAASTPIQVVNLLNDLYTLFDAIISNYDVYKVETIGDAYMLVSGLPLRNGDRHAGQIASTAHHLLESVKGFIVPHKPEVFLKLRIGIHSGSCVAGVVGLTMPRYCLFGDTVNTASRMESNGLALRIHVSPWCKQVLDKLGGYELEDRGLVPMNGKGEIHTFWLLGQDPSYKITKVKPPPQKLTQEAIEIAANRVIPDDV.

A signal peptide spans 1 to 21; it reads MAHARHLFLFMVAFTITMVIA. The Extracellular segment spans residues 22–510; that stretch reads RLDFNPTIIN…GELCTNWALY (489 aa). Residues asparagine 185 and asparagine 409 are each glycosylated (N-linked (GlcNAc...) asparagine). Residues 511 to 531 traverse the membrane as a helical segment; the sequence is LGASIPTFLIIFGGLIGFFIY. Residues 532-1125 lie on the Cytoplasmic side of the membrane; it reads RKRAYEAALD…AANRVIPDDV (594 aa). A Protein kinase domain is found at 571–839; the sequence is MSAISVISNA…PNIMAVRTML (269 aa). One can recognise a Guanylate cyclase domain in the interval 914-1044; it reads SIFFSDIVGF…DTVNTASRME (131 aa).

The protein belongs to the adenylyl cyclase class-4/guanylyl cyclase family.

Its subcellular location is the membrane. The catalysed reaction is GTP = 3',5'-cyclic GMP + diphosphate. Functionally, implicated as a cell-surface receptor on spermatozoa for 'speract' a chemotactic peptide, and on various other cells as a receptor for atrial natriuretic peptide. This chain is Speract receptor, found in Strongylocentrotus purpuratus (Purple sea urchin).